The sequence spans 457 residues: Siroheme synthase 2 (457 aa).

A precorrin-2 dehydrogenase /sirohydrochlorin ferrochelatase region spans residues 1-204; the sequence is MDHLPIFCQL…DDEQAVTRIT (204 aa). Residues 22–23 and 43–44 contribute to the NAD(+) site; these read DV and LA. S128 is modified (phosphoserine). Residues 216–457 form a uroporphyrinogen-III C-methyltransferase region; the sequence is GEVVLVGAGP…RDKLNWFSSK (242 aa). P225 provides a ligand contact to S-adenosyl-L-methionine. The Proton acceptor role is filled by D248. K270 acts as the Proton donor in catalysis. Residues 301 to 303, I306, 331 to 332, M382, and G411 contribute to the S-adenosyl-L-methionine site; these read GGD and TA.

In the N-terminal section; belongs to the precorrin-2 dehydrogenase / sirohydrochlorin ferrochelatase family. The protein in the C-terminal section; belongs to the precorrin methyltransferase family.

It catalyses the reaction uroporphyrinogen III + 2 S-adenosyl-L-methionine = precorrin-2 + 2 S-adenosyl-L-homocysteine + H(+). The catalysed reaction is precorrin-2 + NAD(+) = sirohydrochlorin + NADH + 2 H(+). It carries out the reaction siroheme + 2 H(+) = sirohydrochlorin + Fe(2+). It functions in the pathway cofactor biosynthesis; adenosylcobalamin biosynthesis; precorrin-2 from uroporphyrinogen III: step 1/1. It participates in cofactor biosynthesis; adenosylcobalamin biosynthesis; sirohydrochlorin from precorrin-2: step 1/1. The protein operates within porphyrin-containing compound metabolism; siroheme biosynthesis; precorrin-2 from uroporphyrinogen III: step 1/1. Its pathway is porphyrin-containing compound metabolism; siroheme biosynthesis; siroheme from sirohydrochlorin: step 1/1. It functions in the pathway porphyrin-containing compound metabolism; siroheme biosynthesis; sirohydrochlorin from precorrin-2: step 1/1. Functionally, multifunctional enzyme that catalyzes the SAM-dependent methylations of uroporphyrinogen III at position C-2 and C-7 to form precorrin-2 via precorrin-1. Then it catalyzes the NAD-dependent ring dehydrogenation of precorrin-2 to yield sirohydrochlorin. Finally, it catalyzes the ferrochelation of sirohydrochlorin to yield siroheme. This chain is Siroheme synthase 2, found in Cronobacter sakazakii (strain ATCC BAA-894) (Enterobacter sakazakii).